Here is a 401-residue protein sequence, read N- to C-terminus: Argininosuccinate synthase (401 aa).

Residue A9 to S17 coordinates ATP. Y86 provides a ligand contact to L-citrulline. ATP is bound at residue G116. Residues T118, N122, and D123 each coordinate L-aspartate. N122 is an L-citrulline binding site. L-citrulline-binding residues include R126, S174, S183, E259, and Y271.

The protein belongs to the argininosuccinate synthase family. Type 1 subfamily. As to quaternary structure, homotetramer.

Its subcellular location is the cytoplasm. The enzyme catalyses L-citrulline + L-aspartate + ATP = 2-(N(omega)-L-arginino)succinate + AMP + diphosphate + H(+). It functions in the pathway amino-acid biosynthesis; L-arginine biosynthesis; L-arginine from L-ornithine and carbamoyl phosphate: step 2/3. This Bacillus thuringiensis subsp. konkukian (strain 97-27) protein is Argininosuccinate synthase.